The primary structure comprises 241 residues: Putative integrase ORF241 (241 aa).

The Tyr recombinase domain occupies 82-241 (VEAKKTLVSA…AIEMLRKLAD (160 aa)). Catalysis depends on residues Arg119, Lys144, His191, Arg194, and His217. Residue Tyr226 is the O-(3'-phospho-DNA)-tyrosine intermediate of the active site.

The protein belongs to the 'phage' integrase family.

Functionally, this protein may encode an integrase, which is necessary for integration of the viral DNA into host genome. This chain is Putative integrase ORF241, found in Acidianus convivator (ATV).